Here is a 68-residue protein sequence, read N- to C-terminus: Small integral membrane protein 10-like protein 1 (68 aa).

The interval 1 to 21 (MAPAAAPSSLAVRASSPAATP) is disordered.

The polypeptide is Small integral membrane protein 10-like protein 1 (Homo sapiens (Human)).